Reading from the N-terminus, the 403-residue chain is Adenylate cyclase (403 aa).

Polar residues predominate over residues 1–16 (MSTEHTNTPRADSPQS). The segment at 1 to 37 (MSTEHTNTPRADSPQSAAEAVRGARQHAPAATPAESD) is disordered. The pyruvate binding stretch occupies residues 31–60 (ATPAESDPILELAEAMEGPLRIPAHTPEAV). The Guanylate cyclase domain maps to 238–347 (AVGFADLVSY…PTVNMAARLT (110 aa)). Mg(2+) is bound by residues aspartate 243 and aspartate 287.

This sequence belongs to the adenylyl cyclase class-3 family. As to quaternary structure, homodimer. Mg(2+) serves as cofactor.

It is found in the cytoplasm. It catalyses the reaction ATP = 3',5'-cyclic AMP + diphosphate. Pyruvate-stimulated. Its function is as follows. Plays essential roles in regulation of cellular metabolism by catalyzing the synthesis of a second messenger, cAMP. This chain is Adenylate cyclase (cya), found in Glutamicibacter nicotianae (Arthrobacter nicotianae).